Consider the following 427-residue polypeptide: MGSRGDHGGGGGGRGAARATQLKVLVPSSFRKMRICDELAAQLGVGVGGGGAPRAATARVASPLGKAWDVGVVRDGDGRAFLGRGWAEFAAAHGLGVGWFVVLRHGGGVLAVEAFDTTCCLRVFGAPPAEAGRATDTSRKPQFLTVLLPGIMDKMRIPDKFVRDYITGENLNSNMAIILSPLGKSWRVELDKDQSGVFLGGGWLQFLSFHGISRGDVVIFRYEGNLVFKISVFGPNGRQKDFKAKGISIYQGTGEQQEAPSFSRRKCNNKKKSRFGEDDGNQQEMPCSRKGSGNKGRTSDRETKRMRKTRSVYEIGPRSWIKKEINEYVLERCILSLARTFCESIGLVEESSITLMMIDTTSTQGDQGGSSSSSRSWEVTGRRYKDACYLLGAGWRRFCEDNGVRSGDVCVFTVLDTTLWRVDIERC.

2 DNA-binding regions (TF-B3) span residues 25 to 118 (LVPS…FDTT) and 140 to 236 (KPQF…FGPN). The disordered stretch occupies residues 253-309 (TGEQQEAPSFSRRKCNNKKKSRFGEDDGNQQEMPCSRKGSGNKGRTSDRETKRMRKT). Residues 263–273 (SRRKCNNKKKS) show a composition bias toward basic residues. The TF-B3 3 DNA-binding region spans 320–427 (WIKKEINEYV…TLWRVDIERC (108 aa)).

The protein resides in the nucleus. This chain is Putative B3 domain-containing protein Os04g0346900, found in Oryza sativa subsp. japonica (Rice).